A 233-amino-acid chain; its full sequence is Ribosomal RNA large subunit methyltransferase E (233 aa).

Gly-80, Trp-82, Asp-108, Asp-124, and Asp-148 together coordinate S-adenosyl-L-methionine. Lys-188 functions as the Proton acceptor in the catalytic mechanism.

It belongs to the class I-like SAM-binding methyltransferase superfamily. RNA methyltransferase RlmE family.

The protein localises to the cytoplasm. The catalysed reaction is uridine(2552) in 23S rRNA + S-adenosyl-L-methionine = 2'-O-methyluridine(2552) in 23S rRNA + S-adenosyl-L-homocysteine + H(+). Its function is as follows. Specifically methylates the uridine in position 2552 of 23S rRNA at the 2'-O position of the ribose in the fully assembled 50S ribosomal subunit. The polypeptide is Ribosomal RNA large subunit methyltransferase E (Ruegeria pomeroyi (strain ATCC 700808 / DSM 15171 / DSS-3) (Silicibacter pomeroyi)).